The following is a 390-amino-acid chain: Chalcone synthase (390 aa).

Cys164 is a catalytic residue.

Belongs to the thiolase-like superfamily. Chalcone/stilbene synthases family.

The enzyme catalyses (E)-4-coumaroyl-CoA + 3 malonyl-CoA + 3 H(+) = 2',4,4',6'-tetrahydroxychalcone + 3 CO2 + 4 CoA. The protein operates within secondary metabolite biosynthesis; flavonoid biosynthesis. Functionally, the primary product of this enzyme is 4,2',4',6'-tetrahydroxychalcone (also termed naringenin-chalcone or chalcone) which undergoes enzyme-catalyzed or spontaneous isomerization into naringenin. The protein is Chalcone synthase of Hypericum androsaemum (Tutsan).